We begin with the raw amino-acid sequence, 478 residues long: Islet cell autoantigen 1 (478 aa).

The AH domain occupies 50 to 253 (ASDADLDAKL…TSHTMAAIHE (204 aa)). Residues 306–317 (EHKDSSAYKTEE) are compositionally biased toward basic and acidic residues. Disordered stretches follow at residues 306 to 365 (EHKD…SGDK) and 398 to 422 (LKEP…GFLP).

Predominantly expressed in brain, pancreas and stomach mucosa. High expression also found in stomach muscle and testis.

Its subcellular location is the cytoplasm. It localises to the cytosol. The protein resides in the golgi apparatus membrane. It is found in the cytoplasmic vesicle. The protein localises to the secretory vesicle membrane. Its subcellular location is the secretory vesicle. It localises to the synaptic vesicle membrane. In terms of biological role, may play a role in neurotransmitter secretion. This chain is Islet cell autoantigen 1, found in Mus musculus (Mouse).